We begin with the raw amino-acid sequence, 449 residues long: Cyclin-B1-5 (449 aa).

Disordered regions lie at residues 1-37 (MATR…AGRP) and 98-147 (PARK…GGSA). Low complexity-rich tracts occupy residues 8-37 (AAAA…AGRP) and 136-147 (SEGAGSSSGGSA).

It belongs to the cyclin family. Cyclin AB subfamily.

The polypeptide is Cyclin-B1-5 (CYCB1-5) (Oryza sativa subsp. japonica (Rice)).